The primary structure comprises 894 residues: Peroxisomal hydratase-dehydrogenase-epimerase (894 aa).

Short-chain dehydrogenase like regions lie at residues 6–230 and 311–523; these read RFDG…HKNN and DFKG…CSDK. Val-14, Lys-53, Asn-99, Arg-132, Tyr-164, Lys-168, and Ala-197 together coordinate NADP(+). Catalysis depends on Tyr-164, which acts as the Proton acceptor. The Lowers pKa of active site Tyr role is filled by Lys-168. Tyr-458 functions as the Proton acceptor in the catalytic mechanism. Residues His-693, Gly-694, and Lys-723 each coordinate (3R)-3-hydroxydecanoyl-CoA. A disordered region spans residues 763–782; sequence KKPADRGASTAANKPPARSP. Residues 776–887 form the MaoC-like domain; that stretch reads KPPARSPDAV…VKETGKLAIS (112 aa). Residues Asp-803, Asn-805, Gly-826, Phe-851, and Gly-853 each coordinate (3R)-3-hydroxydecanoyl-CoA.

It belongs to the short-chain dehydrogenases/reductases (SDR) family. Monomer.

The protein resides in the peroxisome. It catalyses the reaction a (3R)-3-hydroxyacyl-CoA = a (2E)-enoyl-CoA + H2O. It carries out the reaction a (3R)-3-hydroxyacyl-CoA + NAD(+) = a 3-oxoacyl-CoA + NADH + H(+). It participates in lipid metabolism; fatty acid beta-oxidation. Its function is as follows. Second trifunctional enzyme acting on the beta-oxidation pathway for fatty acids, possessing hydratase-dehydrogenase-epimerase activities. Converts trans-2-enoyl-CoA via D-3-hydroxyacyl-CoA to 3-ketoacyl-CoA. This chain is Peroxisomal hydratase-dehydrogenase-epimerase (fox-2), found in Neurospora crassa (strain ATCC 24698 / 74-OR23-1A / CBS 708.71 / DSM 1257 / FGSC 987).